The chain runs to 987 residues: Probable outer membrane protein PmpG (987 aa).

An N-terminal signal peptide occupies residues 1 to 25 (MMQTPFHKFFLLAMLSYSLLQGGHA). An Autotransporter domain is found at 707-987 (GRAYCRGIWI…GLSIGSKIRF (281 aa)).

This sequence belongs to the PMP outer membrane protein family.

The protein resides in the secreted. The protein localises to the cell wall. It localises to the cell outer membrane. The protein is Probable outer membrane protein PmpG (pmpG) of Chlamydia muridarum (strain MoPn / Nigg).